The chain runs to 201 residues: Holliday junction branch migration complex subunit RuvA (201 aa).

The segment at 1-63 (MIASVRGEVL…EDSMTLYGFA (63 aa)) is domain I. A domain II region spans residues 64 to 142 (DTEARDLFGL…LVPVQAGPPG (79 aa)). Positions 143–153 (STPAVAATPVR) are flexible linker. The interval 153 to 201 (REQVVEALTGLGFPLKQAEQALDTVLAEQPAADTSTALRAALSLLGKNR) is domain III.

Belongs to the RuvA family. Homotetramer. Forms an RuvA(8)-RuvB(12)-Holliday junction (HJ) complex. HJ DNA is sandwiched between 2 RuvA tetramers; dsDNA enters through RuvA and exits via RuvB. An RuvB hexamer assembles on each DNA strand where it exits the tetramer. Each RuvB hexamer is contacted by two RuvA subunits (via domain III) on 2 adjacent RuvB subunits; this complex drives branch migration. In the full resolvosome a probable DNA-RuvA(4)-RuvB(12)-RuvC(2) complex forms which resolves the HJ.

The protein resides in the cytoplasm. Its function is as follows. The RuvA-RuvB-RuvC complex processes Holliday junction (HJ) DNA during genetic recombination and DNA repair, while the RuvA-RuvB complex plays an important role in the rescue of blocked DNA replication forks via replication fork reversal (RFR). RuvA specifically binds to HJ cruciform DNA, conferring on it an open structure. The RuvB hexamer acts as an ATP-dependent pump, pulling dsDNA into and through the RuvAB complex. HJ branch migration allows RuvC to scan DNA until it finds its consensus sequence, where it cleaves and resolves the cruciform DNA. This is Holliday junction branch migration complex subunit RuvA from Nocardia farcinica (strain IFM 10152).